The following is a 286-amino-acid chain: Acetylglutamate kinase (286 aa).

Substrate contacts are provided by residues 63–64 (GG), Arg85, and Asn178.

The protein belongs to the acetylglutamate kinase family. ArgB subfamily.

It localises to the cytoplasm. The catalysed reaction is N-acetyl-L-glutamate + ATP = N-acetyl-L-glutamyl 5-phosphate + ADP. The protein operates within amino-acid biosynthesis; L-arginine biosynthesis; N(2)-acetyl-L-ornithine from L-glutamate: step 2/4. In terms of biological role, catalyzes the ATP-dependent phosphorylation of N-acetyl-L-glutamate. This Clostridioides difficile (strain 630) (Peptoclostridium difficile) protein is Acetylglutamate kinase.